The chain runs to 441 residues: 3-oxo-glucose-6-phosphate:glutamate aminotransferase (441 aa).

98-99 contributes to the substrate binding site; the sequence is TS. Residue 125-126 participates in pyridoxal 5'-phosphate binding; the sequence is GT. Substrate is bound at residue Phe151. 2 residues coordinate pyridoxal 5'-phosphate: Gln225 and Ser242. A substrate-binding site is contributed by 244 to 246; sequence NPY. An N6-(pyridoxal phosphate)lysine modification is found at Lys247. The substrate site is built by Tyr274 and Lys282. Residue Asn292 participates in pyridoxal 5'-phosphate binding. Tyr379 provides a ligand contact to substrate.

This sequence belongs to the DegT/DnrJ/EryC1 family. As to quaternary structure, homodimer. It depends on pyridoxal 5'-phosphate as a cofactor.

The catalysed reaction is 3-dehydro-D-glucose 6-phosphate + L-glutamate = D-kanosamine 6-phosphate + 2-oxoglutarate. It functions in the pathway antibiotic biosynthesis; kanosamine biosynthesis. Its function is as follows. Involved in the biosynthesis of kanosamine (3-amino-3-deoxy-D-glucose), which is known to have antibiotic and antifungal properties, and to be a precursor of the antibiotic neotrehalosadiamine (3,3'-diamino-3,3'-dideoxy-alpha,beta-trehalose (NTD)). Catalyzes the reversible pyridoxal phosphate-dependent transamination of 3-dehydro-alpha-D-glucose 6-phosphate to form alpha-D-kanosamine-6-phosphate. It can only use alpha-anomer and glutamate is the only amino donor. This is 3-oxo-glucose-6-phosphate:glutamate aminotransferase (ntdA) from Bacillus subtilis (strain 168).